The chain runs to 428 residues: Cytochrome c biogenesis protein CcsB (428 aa).

3 consecutive transmembrane segments (helical) span residues 14 to 34, 72 to 92, and 162 to 182; these read LRFA…GTFI, SNWF…CSFR, and LGPI…AYGN.

Belongs to the Ccs1/CcsB family. As to quaternary structure, may interact with CcsA.

Its subcellular location is the cellular thylakoid membrane. Functionally, required during biogenesis of c-type cytochromes (cytochrome c6 and cytochrome f) at the step of heme attachment. This Prochlorococcus marinus subsp. pastoris (strain CCMP1986 / NIES-2087 / MED4) protein is Cytochrome c biogenesis protein CcsB.